The chain runs to 755 residues: DNA ligase 1 (755 aa).

The transit peptide at 1–44 (MRRLLTGCLLSSARPLKSRLPLLMSSSLPSSAGKKPKQATLARF) directs the protein to the mitochondrion. At arginine 2 the chain carries N-acetylserine. Residues 47-60 (SMKNKPTEGTPSPK) show a composition bias toward polar residues. Disordered stretches follow at residues 47–79 (SMKN…GEEE) and 97–127 (PSSM…QRLV). Phosphoserine is present on residues serine 58 and serine 75. The span at 102–114 (SNFSSIPSSAPSS) shows a compositional bias: low complexity. Phosphoserine is present on residues serine 119 and serine 123. An interaction with target DNA region spans residues 309 to 318 (KLRIGLAEKT). Residue glutamate 417 coordinates ATP. The active-site N6-AMP-lysine intermediate is the lysine 419. ATP-binding residues include arginine 424 and arginine 440. Glutamate 472 lines the Mg(2+) pocket. The segment at 493-495 (KRK) is interaction with target DNA. Glutamate 571 provides a ligand contact to Mg(2+). ATP-binding residues include lysine 576, arginine 590, and lysine 596.

This sequence belongs to the ATP-dependent DNA ligase family. Mg(2+) serves as cofactor.

It is found in the mitochondrion. Its subcellular location is the nucleus. The catalysed reaction is ATP + (deoxyribonucleotide)n-3'-hydroxyl + 5'-phospho-(deoxyribonucleotide)m = (deoxyribonucleotide)n+m + AMP + diphosphate.. In terms of biological role, DNA ligase that seals nicks in double-stranded DNA during DNA replication, DNA recombination and DNA repair. The mitochondrial form is required for mitochondrial DNA maintenance but is non-essential while the nuclear form is essential for cell viability. In Saccharomyces cerevisiae (strain ATCC 204508 / S288c) (Baker's yeast), this protein is DNA ligase 1 (CDC9).